We begin with the raw amino-acid sequence, 509 residues long: Dihydrolipoyl dehydrogenase, mitochondrial (509 aa).

The transit peptide at 1–35 (MQSWSRVYCTLAKRGHFNRIAHGLQGVSAVPLRTY) directs the protein to the mitochondrion. N6-acetyllysine; alternate is present on K66. K66 bears the N6-succinyllysine; alternate mark. FAD is bound by residues 71-80 (EKNETLGGTC) and K89. A disulfide bridge links C80 with C85. Residues K104, K122, K132, and K143 each carry the N6-acetyllysine; alternate modification. An N6-succinyllysine; alternate mark is found at K104, K122, K132, and K143. G154 provides a ligand contact to FAD. 2 positions are modified to N6-succinyllysine: K159 and K166. 183 to 185 (TGS) provides a ligand contact to FAD. Residues 220 to 227 (GAGVIGVE) and E243 each bind NAD(+). N6-succinyllysine is present on residues K273 and K277. Residue V278 coordinates NAD(+). 2 positions are modified to phosphoserine: S285 and S297. An NAD(+)-binding site is contributed by G314. The residue at position 346 (K346) is an N6-acetyllysine. FAD contacts are provided by residues D355 and 361-364 (MLAH). The residue at position 410 (K410) is an N6-acetyllysine; alternate. K410 is modified (N6-succinyllysine; alternate). N6-acetyllysine occurs at positions 417 and 420. An N6-succinyllysine modification is found at K430. H487 (proton acceptor) is an active-site residue. S502 carries the phosphoserine modification. N6-acetyllysine; alternate is present on K505. K505 bears the N6-succinyllysine; alternate mark.

It belongs to the class-I pyridine nucleotide-disulfide oxidoreductase family. Homodimer. Part of the multimeric pyruvate dehydrogenase complex that contains multiple copies of pyruvate dehydrogenase (subunits PDHA (PDHA1 or PDHA2) and PDHB, E1), dihydrolipoamide acetyltransferase (DLAT, E2) and lipoamide dehydrogenase (DLD, E3). These subunits are bound to an inner core composed of about 48 DLAT and 12 PDHX molecules (by non covalent bonds). The 2-oxoglutarate dehydrogenase complex is composed of OGDH (2-oxoglutarate dehydrogenase; E1), DLST (dihydrolipoamide succinyltransferase; E2), DLD (dihydrolipoamide dehydrogenase; E3) and the assembly factor KGD4. It contains multiple copies of the three enzymatic components (E1, E2 and E3). In the nucleus, the 2-oxoglutarate dehydrogenase complex associates with KAT2A. Interacts with PDHX. FAD is required as a cofactor. Tyrosine phosphorylated. As to expression, expressed in heart (at protein level).

It is found in the mitochondrion matrix. It localises to the nucleus. Its subcellular location is the cell projection. The protein localises to the cilium. The protein resides in the flagellum. It is found in the cytoplasmic vesicle. It localises to the secretory vesicle. Its subcellular location is the acrosome. The catalysed reaction is N(6)-[(R)-dihydrolipoyl]-L-lysyl-[protein] + NAD(+) = N(6)-[(R)-lipoyl]-L-lysyl-[protein] + NADH + H(+). Its function is as follows. Lipoamide dehydrogenase is a component of the glycine cleavage system as well as an E3 component of three alpha-ketoacid dehydrogenase complexes (pyruvate-, alpha-ketoglutarate-, and branched-chain amino acid-dehydrogenase complex). The 2-oxoglutarate dehydrogenase complex is mainly active in the mitochondrion. A fraction of the 2-oxoglutarate dehydrogenase complex also localizes in the nucleus and is required for lysine succinylation of histones: associates with KAT2A on chromatin and provides succinyl-CoA to histone succinyltransferase KAT2A. In monomeric form may have additional moonlighting function as serine protease. Involved in the hyperactivation of spermatazoa during capacitation and in the spermatazoal acrosome reaction. This Sus scrofa (Pig) protein is Dihydrolipoyl dehydrogenase, mitochondrial (DLD).